We begin with the raw amino-acid sequence, 275 residues long: 3-methyl-2-oxobutanoate hydroxymethyltransferase (275 aa).

Residues aspartate 49 and aspartate 88 each coordinate Mg(2+). Residues 49–50 (DS), aspartate 88, and lysine 118 each bind 3-methyl-2-oxobutanoate. Glutamate 120 contacts Mg(2+). The active-site Proton acceptor is glutamate 187.

This sequence belongs to the PanB family. Homodecamer; pentamer of dimers. Requires Mg(2+) as cofactor.

Its subcellular location is the cytoplasm. It catalyses the reaction 3-methyl-2-oxobutanoate + (6R)-5,10-methylene-5,6,7,8-tetrahydrofolate + H2O = 2-dehydropantoate + (6S)-5,6,7,8-tetrahydrofolate. The protein operates within cofactor biosynthesis; (R)-pantothenate biosynthesis; (R)-pantoate from 3-methyl-2-oxobutanoate: step 1/2. Its function is as follows. Catalyzes the reversible reaction in which hydroxymethyl group from 5,10-methylenetetrahydrofolate is transferred onto alpha-ketoisovalerate to form ketopantoate. In Bordetella petrii (strain ATCC BAA-461 / DSM 12804 / CCUG 43448), this protein is 3-methyl-2-oxobutanoate hydroxymethyltransferase.